Here is a 245-residue protein sequence, read N- to C-terminus: Keratin-associated protein 10-12 (245 aa).

19 repeat units span residues 36-40, 41-45, 62-66, 84-88, 94-98, 104-108, 109-113, 114-118, 119-123, 124-128, 131-135, 141-145, 151-155, 156-160, 161-165, 173-177, 183-187, 188-192, and 214-218. The interval 36–218 is 19 X 5 AA repeats of C-C-X(3); the sequence is CCEPPCCAPA…VPVPSCCVPT (183 aa).

It belongs to the KRTAP type 10 family. As to quaternary structure, interacts with hair keratins. As to expression, restricted to a narrow region of the hair fiber cuticle, lying approximately 20 cell layers above the apex of the dermal papilla of the hair root; not detected in any other tissues.

In terms of biological role, in the hair cortex, hair keratin intermediate filaments are embedded in an interfilamentous matrix, consisting of hair keratin-associated proteins (KRTAP), which are essential for the formation of a rigid and resistant hair shaft through their extensive disulfide bond cross-linking with abundant cysteine residues of hair keratins. The matrix proteins include the high-sulfur and high-glycine-tyrosine keratins. This chain is Keratin-associated protein 10-12 (KRTAP10-12), found in Homo sapiens (Human).